A 483-amino-acid chain; its full sequence is Protein adenylyltransferase Fic (483 aa).

Residues 20–42 (AFFFIAGSLATFVFHALTSSSSV) form a helical membrane-spanning segment. 2 TPR repeats span residues 107–140 (ALGA…APKH) and 141–175 (PEVL…SPSN). The short motif at 232-237 (SVGIEG) is the Inhibitory (S/T)XXXE(G/N) motif element. ATP contacts are provided by residues glutamate 236 and 317–320 (VGGH). In terms of domain architecture, Fido spans 286-421 (ITLKDILELH…IRPFVRFIAD (136 aa)). Histidine 364 is an active-site residue. ATP contacts are provided by residues 368-375 (DGNGRTSR), 400-401 (YY), and asparagine 408. The tract at residues 464–483 (SAPEPYESGSGLDSGVNGMP) is disordered.

Belongs to the fic family. In terms of assembly, homodimer.

It is found in the membrane. The catalysed reaction is L-tyrosyl-[protein] + ATP = O-(5'-adenylyl)-L-tyrosyl-[protein] + diphosphate. It carries out the reaction L-threonyl-[protein] + ATP = 3-O-(5'-adenylyl)-L-threonyl-[protein] + diphosphate. It catalyses the reaction 3-O-(5'-adenylyl)-L-threonyl-[protein] + H2O = L-threonyl-[protein] + AMP + H(+). With respect to regulation, the side chain of Glu-236 determines which of the two opposing activities (AMPylase or de-AMPylase) will take place. In response to endoplasmic reticulum stress, mediates de-AMPylase activity. Adenylyltransferase activity is inhibited by the inhibitory helix present at the N-terminus: Glu-236 binds ATP and competes with ATP-binding at Arg-375, thereby preventing adenylyltransferase activity. In unstressed cells, disengagement of Glu-236 promotes adenylyltransferase activity. Activation dissociates ATP-binding from Glu-236, allowing ordered binding of the entire ATP moiety with the alpha-phosphate in an orientation that is productive for accepting an incoming target hydroxyl side chain. Its function is as follows. Protein that can both mediate the addition of adenosine 5'-monophosphate (AMP) to specific residues of target proteins (AMPylation), and the removal of the same modification from target proteins (de-AMPylation), depending on the context. The side chain of Glu-236 determines which of the two opposing activities (AMPylase or de-AMPylase) will take place. Acts as a key regulator of the unfolded protein response (UPR) by mediating AMPylation or de-AMPylation of Hsc70-3/BiP. In unstressed cells, acts as an adenylyltransferase by mediating AMPylation of Hsc70-3/BiP at 'Thr-518', thereby inactivating it. In response to endoplasmic reticulum stress, acts as a phosphodiesterase by mediating removal of ATP (de-AMPylation) from Hsc70-3/BiP at 'Thr-518', leading to restore HSPA5/BiP activity. The sequence is that of Protein adenylyltransferase Fic from Drosophila grimshawi (Hawaiian fruit fly).